A 154-amino-acid chain; its full sequence is Low molecular weight protein-tyrosine-phosphatase PtpA (154 aa).

C8 serves as the catalytic Nucleophile. The active site involves R14. D120 acts as the Proton donor in catalysis.

It belongs to the low molecular weight phosphotyrosine protein phosphatase family.

It catalyses the reaction O-phospho-L-tyrosyl-[protein] + H2O = L-tyrosyl-[protein] + phosphate. Its function is as follows. Dephosphorylates the phosphotyrosine-containing proteins. The polypeptide is Low molecular weight protein-tyrosine-phosphatase PtpA (ptpA) (Staphylococcus saprophyticus subsp. saprophyticus (strain ATCC 15305 / DSM 20229 / NCIMB 8711 / NCTC 7292 / S-41)).